Consider the following 481-residue polypeptide: Cytochrome c oxidase subunit 1 (481 aa).

The chain crosses the membrane as a helical span at residues 22–42 (ISYLWLAYWFGMIGFYMSVLI). Ca(2+) is bound by residues Glu-45 and Gly-50. The next 8 membrane-spanning stretches (helical) occupy residues 64-84 (LLFTLHGLIMVFFNIMTGLFG), 109-129 (SLLFQPIGFVLVVSSIYLEIG), 151-171 (FIIFGLLAAGIASTLSSVNFI), 194-214 (IVLTSFLLLLSLPVVTAVFLM), 240-260 (LFWFFGHPEVYIMILPGFGII), 278-298 (MILAMGFNSFVRLFGLGTSYV), 309-329 (YFTTVTILIALPTGNKIFNWV), and 343-363 (LVLFTVLFIVNFVIGGTTGVV). His-69 contacts Fe(II)-heme a. Cu cation is bound at residue His-246. The 1'-histidyl-3'-tyrosine (His-Tyr) cross-link spans 246-250 (HPEVY). An O2-binding site is contributed by Tyr-250. Mg(2+) is bound by residues His-374 and Asp-375. His-382 is a heme a3 binding site. Helical transmembrane passes span 382-402 (HFHFVLSIGAIISMICFIIYI) and 420-440 (IAPIFMISVLLTFLPMHFTGF). Residue His-384 participates in Fe(II)-heme a binding. Ca(2+) is bound at residue Pro-448. A helical membrane pass occupies residues 459–479 (FICTLGATMMLVLKLAILFII).

Belongs to the heme-copper respiratory oxidase family. As to quaternary structure, component of the cytochrome c oxidase (complex IV, CIV), a multisubunit enzyme composed of a catalytic core of 3 subunits and several supernumerary subunits. The complex exists as a monomer or a dimer and forms supercomplexes (SCs) in the inner mitochondrial membrane with ubiquinol-cytochrome c oxidoreductase (cytochrome b-c1 complex, complex III, CIII). Heme is required as a cofactor. It depends on Cu cation as a cofactor.

The protein localises to the mitochondrion inner membrane. The enzyme catalyses 4 Fe(II)-[cytochrome c] + O2 + 8 H(+)(in) = 4 Fe(III)-[cytochrome c] + 2 H2O + 4 H(+)(out). It functions in the pathway energy metabolism; oxidative phosphorylation. Functionally, component of the cytochrome c oxidase, the last enzyme in the mitochondrial electron transport chain which drives oxidative phosphorylation. The respiratory chain contains 3 multisubunit complexes succinate dehydrogenase (complex II, CII), ubiquinol-cytochrome c oxidoreductase (cytochrome b-c1 complex, complex III, CIII) and cytochrome c oxidase (complex IV, CIV), that cooperate to transfer electrons derived from NADH and succinate to molecular oxygen, creating an electrochemical gradient over the inner membrane that drives transmembrane transport and the ATP synthase. Cytochrome c oxidase is the component of the respiratory chain that catalyzes the reduction of oxygen to water. Electrons originating from reduced cytochrome c in the intermembrane space (IMS) are transferred via the dinuclear copper A center (CU(A)) of subunit 2 and heme A of subunit 1 to the active site in subunit 1, a binuclear center (BNC) formed by heme A3 and copper B (CU(B)). The BNC reduces molecular oxygen to 2 water molecules using 4 electrons from cytochrome c in the IMS and 4 protons from the mitochondrial matrix. The chain is Cytochrome c oxidase subunit 1 (MT-CO1) from Theileria parva (East coast fever infection agent).